A 401-amino-acid polypeptide reads, in one-letter code: MKVAKASLLTILAHSVSARFLAEDEINRVQLYPAGSEPEKYLIELAPGDTRWVTEEEKWELRRNGNRFFDITDHKDLGATRLRTKTKSVFPEKCSLQDKVKPLLKDLDKSEIQKNLEKFTSFHTRYYKSDYGRQSSEWLLAKIDSIIKDAGADKNVYAQPFPHTWQQSSIIVTIPGKSNSTVIIGAHQDSINLWLPSILAAPGADDDGSGSMTILEAFRTLLKSKDIVSGKADNTIEFHWYSAEEGGLLGSQAIFSSYEKEGRDIKAMLQQDMTGFVQRTLDAGQPESVGVITDFVDPGLTGFIKKVIVEYCKVPYVETKCGYACSDHASASKAGYPSAFVIESAFEYSDNHIHSVDDTIKYLSFDHMLEHAKMTLGLVYELGFTDFTALEKKGESVSEEL.

Residues 1–18 (MKVAKASLLTILAHSVSA) form the signal peptide. Residues 19-87 (RFLAEDEINR…GATRLRTKTK (69 aa)) constitute a propeptide that is removed on maturation. An N-linked (GlcNAc...) asparagine glycan is attached at asparagine 179. Zn(2+)-binding residues include histidine 187, aspartate 206, glutamate 245, and aspartate 272. A disulfide bond links cysteine 321 and cysteine 325. Histidine 354 serves as a coordination point for Zn(2+).

The protein belongs to the peptidase M28 family. M28E subfamily. In terms of assembly, monomer. Zn(2+) serves as cofactor.

The protein resides in the secreted. Extracellular aminopeptidase that allows assimilation of proteinaceous substrates. In Colletotrichum graminicola (strain M1.001 / M2 / FGSC 10212) (Maize anthracnose fungus), this protein is Leucine aminopeptidase 1 (LAP1).